The sequence spans 377 residues: Phytanoyl-CoA hydroxylase-interacting protein-like (377 aa).

The Fibronectin type-III domain occupies 52 to 161 (VPQNIKISNI…EINEFCTADY (110 aa)).

The protein belongs to the PHYHIP family.

In terms of biological role, may play a role in the development of the central system. The sequence is that of Phytanoyl-CoA hydroxylase-interacting protein-like (phyhipl) from Danio rerio (Zebrafish).